Here is a 128-residue protein sequence, read N- to C-terminus: Small ribosomal subunit protein uS9 (128 aa).

The disordered stretch occupies residues 107 to 128 (RAVERKKPGRPKARKRFQFSKR). Residues 113 to 128 (KPGRPKARKRFQFSKR) are compositionally biased toward basic residues.

This sequence belongs to the universal ribosomal protein uS9 family.

This chain is Small ribosomal subunit protein uS9, found in Parabacteroides distasonis (strain ATCC 8503 / DSM 20701 / CIP 104284 / JCM 5825 / NCTC 11152).